A 433-amino-acid chain; its full sequence is Pyrimidine-nucleoside phosphorylase (433 aa).

Residue 81 to 83 (KHS) coordinates phosphate. K(+)-binding residues include Gly-88 and Thr-90. Residues Thr-92, 108-110 (KMS), and Thr-120 each bind phosphate. Substrate-binding residues include Arg-168 and Lys-187. Residues Leu-243, Ala-246, and Glu-255 each coordinate K(+).

Belongs to the thymidine/pyrimidine-nucleoside phosphorylase family. In terms of assembly, homodimer. It depends on K(+) as a cofactor.

The catalysed reaction is uridine + phosphate = alpha-D-ribose 1-phosphate + uracil. The enzyme catalyses thymidine + phosphate = 2-deoxy-alpha-D-ribose 1-phosphate + thymine. It catalyses the reaction 2'-deoxyuridine + phosphate = 2-deoxy-alpha-D-ribose 1-phosphate + uracil. Catalyzes phosphorolysis of the pyrimidine nucleosides uridine, thymidine and 2'-deoxyuridine with the formation of the corresponding pyrimidine base and ribose-1-phosphate. The chain is Pyrimidine-nucleoside phosphorylase (pdp) from Staphylococcus aureus (strain MSSA476).